The chain runs to 180 residues: Geminin homolog (180 aa).

The segment covering 1 to 27 has biased composition (polar residues); the sequence is MSRIGLQQLNNSARNSPFGSEKATGTK. The disordered stretch occupies residues 1–29; sequence MSRIGLQQLNNSARNSPFGSEKATGTKQI.

Belongs to the geminin family. Homodimer. Interacts with cdt-1; the interaction most likely inhibits the ability of cdt-1 to load the mini-chromosome maintenance (MCM) complex onto DNA and therefore reduces DNA replication licensing activity. Interacts with nob-1 and ceh-32.

It is found in the cytoplasm. The protein resides in the nucleus. Functionally, inhibits DNA replication by binding to the DNA replication licensing factor cdt-1. Its interaction with cdt-1 prevents the cdt-1 loading of the mini-chromosome maintenance (MCM) complex onto DNA and therefore DNA replication licencing. The chain is Geminin homolog from Caenorhabditis elegans.